The sequence spans 235 residues: Proteasome subunit alpha (235 aa).

Belongs to the peptidase T1A family. In terms of assembly, the 20S proteasome core is composed of 14 alpha and 14 beta subunits that assemble into four stacked heptameric rings, resulting in a barrel-shaped structure. The two inner rings, each composed of seven catalytic beta subunits, are sandwiched by two outer rings, each composed of seven alpha subunits. The catalytic chamber with the active sites is on the inside of the barrel. Has a gated structure, the ends of the cylinder being occluded by the N-termini of the alpha-subunits. Is capped by the proteasome-associated ATPase, ARC.

The protein resides in the cytoplasm. It participates in protein degradation; proteasomal Pup-dependent pathway. The formation of the proteasomal ATPase ARC-20S proteasome complex, likely via the docking of the C-termini of ARC into the intersubunit pockets in the alpha-rings, may trigger opening of the gate for substrate entry. Interconversion between the open-gate and close-gate conformations leads to a dynamic regulation of the 20S proteasome proteolysis activity. Its function is as follows. Component of the proteasome core, a large protease complex with broad specificity involved in protein degradation. The protein is Proteasome subunit alpha of Arthrobacter sp. (strain FB24).